We begin with the raw amino-acid sequence, 435 residues long: Manganese transport system membrane protein MntC (435 aa).

9 consecutive transmembrane segments (helical) span residues 17–37, 42–62, 68–88, 98–118, 143–163, 166–186, 189–209, 228–248, and 255–275; these read VLAG…FVLL, LIGD…FLFT, PFFL…IQLI, SAIG…LTYI, QDII…IVFF, FTLI…VRFL, LLAC…GVIL, LTGM…AGTL, and GMAT…FSMI.

The protein belongs to the ABC-3 integral membrane protein family. In terms of assembly, the complex is probably composed of two ATP-binding proteins (MntB), two transmembrane proteins (MntC and MntD) and a solute-binding protein (MntA).

Its subcellular location is the cell membrane. Probably part of the ABC transporter complex MntABCD involved in manganese import. Probably responsible for the translocation of the substrate across the membrane. The protein is Manganese transport system membrane protein MntC of Bacillus subtilis (strain 168).